The sequence spans 629 residues: tRNA uridine 5-carboxymethylaminomethyl modification enzyme MnmG (629 aa).

13–18 (GGGHAG) serves as a coordination point for FAD. An NAD(+)-binding site is contributed by 273 to 287 (GPRYCPSIEDKIMRF).

Belongs to the MnmG family. Homodimer. Heterotetramer of two MnmE and two MnmG subunits. FAD serves as cofactor.

It localises to the cytoplasm. NAD-binding protein involved in the addition of a carboxymethylaminomethyl (cmnm) group at the wobble position (U34) of certain tRNAs, forming tRNA-cmnm(5)s(2)U34. This is tRNA uridine 5-carboxymethylaminomethyl modification enzyme MnmG from Tolumonas auensis (strain DSM 9187 / NBRC 110442 / TA 4).